A 125-amino-acid polypeptide reads, in one-letter code: Acidic phospholipase A2 HTe (125 aa).

7 disulfide bridges follow: Cys-11–Cys-77, Cys-27–Cys-124, Cys-29–Cys-45, Cys-44–Cys-105, Cys-51–Cys-98, Cys-61–Cys-91, and Cys-84–Cys-96. Residues Tyr-28, Gly-30, and Gly-32 each contribute to the Ca(2+) site. The active site involves His-48. Asp-49 contributes to the Ca(2+) binding site. The active site involves Asp-99.

The protein belongs to the phospholipase A2 family. Group I subfamily. D49 sub-subfamily. Ca(2+) serves as cofactor. Post-translationally, no glycosylation was detected on this protein. In terms of tissue distribution, expressed by the venom gland.

The protein localises to the secreted. The enzyme catalyses a 1,2-diacyl-sn-glycero-3-phosphocholine + H2O = a 1-acyl-sn-glycero-3-phosphocholine + a fatty acid + H(+). Snake venom phospholipase A2 (PLA2) that blocks neuromuscular transmission, but that does not produce blockade by virtue of a selective action on nerve endings. Instead, the toxin acts both on nerve and on muscle. PLA2 catalyzes the calcium-dependent hydrolysis of the 2-acyl groups in 3-sn-phosphoglycerides. The chain is Acidic phospholipase A2 HTe from Notechis scutatus scutatus (Mainland tiger snake).